The chain runs to 320 residues: uncharacterized protein (320 aa).

This sequence belongs to the NAD(P)-dependent epimerase/dehydratase family.

This is an uncharacterized protein from Staphylococcus saprophyticus subsp. saprophyticus (strain ATCC 15305 / DSM 20229 / NCIMB 8711 / NCTC 7292 / S-41).